A 288-amino-acid polypeptide reads, in one-letter code: Undecaprenyl-diphosphatase (288 aa).

Transmembrane regions (helical) follow at residues Gly-25–Leu-45, Phe-53–Tyr-73, Trp-93–Leu-113, Leu-121–Ile-141, Val-171–Val-191, Ser-196–Leu-216, Gly-231–Ile-251, and Phe-263–Val-283.

Belongs to the UppP family.

The protein resides in the cell membrane. It catalyses the reaction di-trans,octa-cis-undecaprenyl diphosphate + H2O = di-trans,octa-cis-undecaprenyl phosphate + phosphate + H(+). In terms of biological role, catalyzes the dephosphorylation of undecaprenyl diphosphate (UPP). Confers resistance to bacitracin. The sequence is that of Undecaprenyl-diphosphatase from Streptococcus thermophilus (strain ATCC BAA-250 / LMG 18311).